A 283-amino-acid chain; its full sequence is Phosphatidylglycerol--prolipoprotein diacylglyceryl transferase (283 aa).

The next 7 helical transmembrane spans lie at 18 to 38, 62 to 82, 106 to 126, 136 to 156, 190 to 210, 218 to 238, and 252 to 272; these read LGGIEVHWYGLAYACAIVVAF, YFLWAELGIVLGARIGYVLIY, FIGIRGMSYHGGLVGFLIASY, LLIYLDLIAISLPLGYVFGRI, PSQLIEAFLEGVVVFLMVMWA, GLLIVVYGLGYSLMRFIAEFY, and LSMGQILSVFMVIVSLGILLY. Arg-155 serves as a coordination point for a 1,2-diacyl-sn-glycero-3-phospho-(1'-sn-glycerol).

Belongs to the Lgt family.

The protein localises to the cell inner membrane. It carries out the reaction L-cysteinyl-[prolipoprotein] + a 1,2-diacyl-sn-glycero-3-phospho-(1'-sn-glycerol) = an S-1,2-diacyl-sn-glyceryl-L-cysteinyl-[prolipoprotein] + sn-glycerol 1-phosphate + H(+). It participates in protein modification; lipoprotein biosynthesis (diacylglyceryl transfer). Functionally, catalyzes the transfer of the diacylglyceryl group from phosphatidylglycerol to the sulfhydryl group of the N-terminal cysteine of a prolipoprotein, the first step in the formation of mature lipoproteins. This is Phosphatidylglycerol--prolipoprotein diacylglyceryl transferase from Helicobacter pylori (strain J99 / ATCC 700824) (Campylobacter pylori J99).